Consider the following 797-residue polypeptide: Protocadherin beta-11 (797 aa).

Positions 1–26 (MENQGTRTQQIRQVLLLFVLLGMSQA) are cleaved as a signal peptide. Residues 27–690 (GSETWSFSVA…AQADSLTVYL (664 aa)) are Extracellular-facing. Cadherin domains follow at residues 35–133 (VAEE…SPIF), 138–242 (MLLE…SPEF), 247–347 (YEVK…APEI), 352–451 (ITSP…APTF), and 456–561 (YTLF…SPFV). N-linked (GlcNAc...) asparagine glycans are attached at residues N418, N436, N487, and N567. A Cadherin 6 domain is found at 568–671 (GSAPCTELVP…LVDGFSQPYL (104 aa)). The helical transmembrane segment at 691–711 (VVALASVSSLFLFSVLLFVAV) threads the bilayer. Over 712-797 (RLCRRSRAAS…TFRNSFGFNF (86 aa)) the chain is Cytoplasmic.

The protein localises to the cell membrane. Potential calcium-dependent cell-adhesion protein. May be involved in the establishment and maintenance of specific neuronal connections in the brain. This chain is Protocadherin beta-11 (PCDHB11), found in Homo sapiens (Human).